Here is a 164-residue protein sequence, read N- to C-terminus: V-type proton ATPase 16 kDa proteolipid subunit (164 aa).

Residues 1-10 (MSDLCPPTAP) are Lumenal-facing. Residues 11–31 (FFGFMGAAVALIFANLGAAYG) traverse the membrane as a helical segment. The Cytoplasmic segment spans residues 32-53 (TAKSGVGVSSMGVMKPDLVMKS). The chain crosses the membrane as a helical span at residues 54 to 74 (IIPVVMAGVLGIYGLIIAVII). The Lumenal portion of the chain corresponds to 75-96 (GNGVKGPEGGKPQYSSFTGFAH). The helical transmembrane segment at 97–118 (LAAGLACGLSGMAAGIAIGIVG) threads the bilayer. Over 119–130 (DAGVRASAQQAK) the chain is Cytoplasmic. The helical transmembrane segment at 131 to 155 (LYVGMVLILIFAEALGLYGLIVGLI) threads the bilayer. Over 156 to 164 (LTSKEAPCS) the chain is Lumenal.

Belongs to the V-ATPase proteolipid subunit family. V-ATPase is a heteromultimeric enzyme composed of a peripheral catalytic V1 complex (main components: subunits A, B, C, D, E, and F) attached to an integral membrane V0 proton pore complex (main component: the proteolipid protein; which is present as a hexamer that forms the proton-conducting pore).

Its subcellular location is the vacuole membrane. Functionally, proton-conducting pore forming subunit of the membrane integral V0 complex of vacuolar ATPase. V-ATPase is responsible for acidifying a variety of intracellular compartments in eukaryotic cells. The sequence is that of V-type proton ATPase 16 kDa proteolipid subunit (VAP) from Chrysotila carterae (Marine alga).